The chain runs to 453 residues: Chromosomal replication initiator protein DnaA (453 aa).

Residues 1–74 (MKEKQFWNRI…GFEIYDAEIT (74 aa)) form a domain I, interacts with DnaA modulators region. Residues 74-113 (TPHYIFTKPQDTTSSQVEEATNLTLYNYSPKLVSIPYSDT) are domain II. Positions 114-331 (GLKEKYTFDN…GAINDITLIA (218 aa)) are domain III, AAA+ region. ATP is bound by residues Gly158, Gly160, Lys161, and Thr162. Positions 332–453 (RVKKIKDITI…EIESIKKKIK (122 aa)) are domain IV, binds dsDNA.

It belongs to the DnaA family. Oligomerizes as a right-handed, spiral filament on DNA at oriC.

The protein localises to the cytoplasm. Plays an essential role in the initiation and regulation of chromosomal replication. ATP-DnaA binds to the origin of replication (oriC) to initiate formation of the DNA replication initiation complex once per cell cycle. Binds the DnaA box (a 9 base pair repeat at the origin) and separates the double-stranded (ds)DNA. Forms a right-handed helical filament on oriC DNA; dsDNA binds to the exterior of the filament while single-stranded (ss)DNA is stabiized in the filament's interior. The ATP-DnaA-oriC complex binds and stabilizes one strand of the AT-rich DNA unwinding element (DUE), permitting loading of DNA polymerase. After initiation quickly degrades to an ADP-DnaA complex that is not apt for DNA replication. Binds acidic phospholipids. The polypeptide is Chromosomal replication initiator protein DnaA (Streptococcus pneumoniae serotype 19F (strain G54)).